A 249-amino-acid polypeptide reads, in one-letter code: Acetylglutamate kinase (249 aa).

Substrate-binding positions include 42-43 (GG), arginine 64, and asparagine 155.

Belongs to the acetylglutamate kinase family. ArgB subfamily.

It localises to the cytoplasm. The enzyme catalyses N-acetyl-L-glutamate + ATP = N-acetyl-L-glutamyl 5-phosphate + ADP. The protein operates within amino-acid biosynthesis; L-arginine biosynthesis; N(2)-acetyl-L-ornithine from L-glutamate: step 2/4. Its function is as follows. Catalyzes the ATP-dependent phosphorylation of N-acetyl-L-glutamate. This is Acetylglutamate kinase from Endomicrobium trichonymphae.